A 576-amino-acid chain; its full sequence is F-actin capping regulator BSP1 (576 aa).

The segment at 24 to 50 is disordered; sequence RYSNIPSSKPAGEALSPVRSHNSGEYR. Residues Ser-46, Ser-79, and Ser-88 each carry the phosphoserine modification. Disordered stretches follow at residues 132–160 and 173–316; these read NDSN…PREK and GRAD…KRIP. A Phosphoserine modification is found at Ser-185. A compositionally biased stretch (basic and acidic residues) spans 191–206; sequence TRRDHIKITDGNEEKP. A Phosphoserine modification is found at Ser-220. 2 stretches are compositionally biased toward polar residues: residues 243-255 and 264-279; these read SRST…LSSL and KSYN…TVKS. Residues 304 to 313 show a composition bias toward pro residues; sequence KPTPPSPPAK. Phosphoserine is present on residues Ser-309 and Ser-320. The tract at residues 408–470 is interaction with F-actin; that stretch reads SIPEAIKGIQ…LSLRNNLKKR (63 aa). The interval 541 to 576 is disordered; that stretch reads DKYTTSRDETVKETKPLVHPNKNRTRGPRRKLPTRV. Over residues 544–556 the composition is skewed to basic and acidic residues; sequence TTSRDETVKETKP. The interval 547–576 is interaction with the F-actin capping complex; sequence RDETVKETKPLVHPNKNRTRGPRRKLPTRV. A compositionally biased stretch (basic residues) spans 561 to 576; sequence NKNRTRGPRRKLPTRV.

As to quaternary structure, interacts (via C-terminus) with the CAP1-CAP2 F-actin capping protein complex. Interacts with INP52 (via SAC domain); the interaction is direct. Interacts with INP53 (via SAC domain); the interaction is direct. Interacts with RVS167. Interacts with SLA1. Phosphorylated by CDC28.

Its subcellular location is the cytoplasm. The protein localises to the cytoskeleton. It localises to the actin patch. The protein resides in the cell membrane. Recruits the capping protein complex to actin patches and the actomyosin contractile ring, and/or stabilizes their interaction. May serve as an adapter to link INP52 and INP53 to the cortical actin cytoskeleton. Binds F-actin. This chain is F-actin capping regulator BSP1 (BSP1), found in Saccharomyces cerevisiae (strain ATCC 204508 / S288c) (Baker's yeast).